Reading from the N-terminus, the 185-residue chain is ADP-ribosylation factor (185 aa).

Residue Gly-2 is the site of N-myristoyl glycine attachment. GTP is bound by residues 27-34 (GLDAAGKT), 70-74 (DVGGQ), and 129-132 (NKQD).

The protein belongs to the small GTPase superfamily. Arf family.

The protein resides in the golgi apparatus. GTP-binding protein involved in protein trafficking; may modulate vesicle budding and uncoating within the Golgi apparatus. The polypeptide is ADP-ribosylation factor (Neurospora crassa (strain ATCC 24698 / 74-OR23-1A / CBS 708.71 / DSM 1257 / FGSC 987)).